The chain runs to 290 residues: Small ribosomal subunit protein uS2 (290 aa).

This sequence belongs to the universal ribosomal protein uS2 family. Component of the small ribosomal subunit. Mature ribosomes consist of a small (40S) and a large (60S) subunit. The 40S subunit contains about 33 different proteins and 1 molecule of RNA (18S). The 60S subunit contains about 49 different proteins and 3 molecules of RNA (28S, 5.8S and 5S). Interacts with ribosomal protein S21.

The protein localises to the cytoplasm. Required for the assembly and/or stability of the 40S ribosomal subunit. Required for the processing of the 20S rRNA-precursor to mature 18S rRNA in a late step of the maturation of 40S ribosomal subunits. This chain is Small ribosomal subunit protein uS2, found in Culex quinquefasciatus (Southern house mosquito).